We begin with the raw amino-acid sequence, 339 residues long: MTQAQTVAVQSDAIPMAAPAPQRWRVADVVALFELPFNDLMFRAQQVHREHFDANAVQLSTLLSIKTGGCEEDCGYCSQSSHHDTGLKAEKLMDVDTVLDAARAAKANGASRFCMGAAWRNPKERHMPALTEMVRGVKELGLETCMTLGMLEDEQARQLADAGLDYYNHNLDTSPEFYGQVISTRTYQDRLDTLDRVRDAGINVCCGGIIGMGESRRERAGLISQLANLNPYPESVPINNLVAIEGTPLEGTAPLDPFEFVRTIAVARITMPKAVVRLSAGREQLDDAMQAMCFLAGANSMFYGDQLLTTSNPQTQRDRALFERLGIRASQADALSDNA.

A Radical SAM core domain is found at 55 to 282; it reads NAVQLSTLLS…KAVVRLSAGR (228 aa). C70, C74, and C77 together coordinate [4Fe-4S] cluster. Residues C114, C145, C205, and R277 each coordinate [2Fe-2S] cluster.

It belongs to the radical SAM superfamily. Biotin synthase family. As to quaternary structure, homodimer. Requires [4Fe-4S] cluster as cofactor. [2Fe-2S] cluster is required as a cofactor.

It catalyses the reaction (4R,5S)-dethiobiotin + (sulfur carrier)-SH + 2 reduced [2Fe-2S]-[ferredoxin] + 2 S-adenosyl-L-methionine = (sulfur carrier)-H + biotin + 2 5'-deoxyadenosine + 2 L-methionine + 2 oxidized [2Fe-2S]-[ferredoxin]. It functions in the pathway cofactor biosynthesis; biotin biosynthesis; biotin from 7,8-diaminononanoate: step 2/2. Catalyzes the conversion of dethiobiotin (DTB) to biotin by the insertion of a sulfur atom into dethiobiotin via a radical-based mechanism. The chain is Biotin synthase from Burkholderia cenocepacia (strain ATCC BAA-245 / DSM 16553 / LMG 16656 / NCTC 13227 / J2315 / CF5610) (Burkholderia cepacia (strain J2315)).